The chain runs to 329 residues: Ig gamma-2C chain C region (329 aa).

The CH1 stretch occupies residues 1–97 (ARTTAPSVYP…ATKSNLIKRI (97 aa)). Cys27 and Cys82 are joined by a disulfide. The segment at 98–113 (EPRRPKPRPPTDICSC) is hinge. Residues 114 to 222 (DDNLGRPSVF…PIEKTISKPR (109 aa)) are CH2. Cystine bridges form between Cys143–Cys203 and Cys249–Cys307. Residues 223–329 (GKARTPQVYT…QKNLSRSPGK (107 aa)) are CH3.

This is Ig gamma-2C chain C region from Rattus norvegicus (Rat).